The primary structure comprises 215 residues: Probable nicotinate-nucleotide adenylyltransferase (215 aa).

The protein belongs to the NadD family.

The catalysed reaction is nicotinate beta-D-ribonucleotide + ATP + H(+) = deamido-NAD(+) + diphosphate. Its pathway is cofactor biosynthesis; NAD(+) biosynthesis; deamido-NAD(+) from nicotinate D-ribonucleotide: step 1/1. In terms of biological role, catalyzes the reversible adenylation of nicotinate mononucleotide (NaMN) to nicotinic acid adenine dinucleotide (NaAD). The sequence is that of Probable nicotinate-nucleotide adenylyltransferase from Fervidobacterium nodosum (strain ATCC 35602 / DSM 5306 / Rt17-B1).